A 293-amino-acid polypeptide reads, in one-letter code: Putative serine protease 42 (293 aa).

The first 26 residues, 1–26 (MSSGGGSRGLLAWLLLLQPWPGQNWA), serve as a signal peptide directing secretion. The interval 33–60 (LPSPLLSEEGGENPEASPAPGPEAGPPL) is disordered. A Peptidase S1 domain is found at 80 to 293 (IVGGVDAEEG…IVSWGIGCGR (214 aa)). Cys-105 and Cys-121 are disulfide-bonded. The active-site Charge relay system is His-120. A glycan (N-linked (GlcNAc...) asparagine) is linked at Asn-141. Asp-166 serves as the catalytic Charge relay system. N-linked (GlcNAc...) asparagine glycosylation occurs at Asn-177. 3 cysteine pairs are disulfide-bonded: Cys-200-Cys-273, Cys-232-Cys-253, and Cys-263-Cys-291. Ser-267 serves as the catalytic Charge relay system. An N-linked (GlcNAc...) asparagine glycan is attached at Asn-276.

It belongs to the peptidase S1 family.

The protein resides in the cytoplasm. It localises to the cell membrane. Its function is as follows. Plays a role in spermatogenesis. Involved in germ cell survival during meiosis. In Homo sapiens (Human), this protein is Putative serine protease 42.